The primary structure comprises 83 residues: SPbeta prophage-derived uncharacterized protein YopE (83 aa).

Helical transmembrane passes span 5-25 (AYFL…FIFV) and 60-80 (VIAF…TKLF).

It localises to the cell membrane. The polypeptide is SPbeta prophage-derived uncharacterized protein YopE (yopE) (Bacillus subtilis (strain 168)).